The following is a 391-amino-acid chain: Putative protein PLEKHA9 (391 aa).

The sequence is that of Putative protein PLEKHA9 (PLEKHA8P1) from Homo sapiens (Human).